The sequence spans 426 residues: Serine--tRNA ligase (426 aa).

Over residues 41-60 (QTRTEQLQAERNARSKSIGQ) the composition is skewed to polar residues. The interval 41–64 (QTRTEQLQAERNARSKSIGQAKQR) is disordered. Position 233-235 (233-235 (TAE)) interacts with L-serine. Position 264–266 (264–266 (RSE)) interacts with ATP. Glu-287 provides a ligand contact to L-serine. 351–354 (EISS) contributes to the ATP binding site. Ser-387 is a binding site for L-serine.

This sequence belongs to the class-II aminoacyl-tRNA synthetase family. Type-1 seryl-tRNA synthetase subfamily. Homodimer. The tRNA molecule binds across the dimer.

The protein resides in the cytoplasm. It carries out the reaction tRNA(Ser) + L-serine + ATP = L-seryl-tRNA(Ser) + AMP + diphosphate + H(+). The catalysed reaction is tRNA(Sec) + L-serine + ATP = L-seryl-tRNA(Sec) + AMP + diphosphate + H(+). Its pathway is aminoacyl-tRNA biosynthesis; selenocysteinyl-tRNA(Sec) biosynthesis; L-seryl-tRNA(Sec) from L-serine and tRNA(Sec): step 1/1. Catalyzes the attachment of serine to tRNA(Ser). Is also able to aminoacylate tRNA(Sec) with serine, to form the misacylated tRNA L-seryl-tRNA(Sec), which will be further converted into selenocysteinyl-tRNA(Sec). The chain is Serine--tRNA ligase from Pseudomonas fluorescens (strain ATCC BAA-477 / NRRL B-23932 / Pf-5).